Reading from the N-terminus, the 44-residue chain is Large ribosomal subunit protein bL34 (44 aa).

Composition is skewed to basic residues over residues Met-1 to Met-22 and Ile-31 to Val-44. The tract at residues Met-1–Val-44 is disordered.

It belongs to the bacterial ribosomal protein bL34 family.

This Nostoc punctiforme (strain ATCC 29133 / PCC 73102) protein is Large ribosomal subunit protein bL34.